The sequence spans 329 residues: Sulfate/thiosulfate import ATP-binding protein CysA (329 aa).

An ABC transporter domain is found at 3–237 (IEIRNVSKNF…PASDFVYHFL (235 aa)). 35–42 (GPSGCGKT) serves as a coordination point for ATP.

Belongs to the ABC transporter superfamily. Sulfate/tungstate importer (TC 3.A.1.6) family. As to quaternary structure, the complex is composed of two ATP-binding proteins (CysA), two transmembrane proteins (CysT and CysW) and a solute-binding protein (CysP).

Its subcellular location is the cell inner membrane. It catalyses the reaction sulfate(out) + ATP + H2O = sulfate(in) + ADP + phosphate + H(+). The enzyme catalyses thiosulfate(out) + ATP + H2O = thiosulfate(in) + ADP + phosphate + H(+). Functionally, part of the ABC transporter complex CysAWTP involved in sulfate/thiosulfate import. Responsible for energy coupling to the transport system. The polypeptide is Sulfate/thiosulfate import ATP-binding protein CysA (Pseudomonas aeruginosa (strain ATCC 15692 / DSM 22644 / CIP 104116 / JCM 14847 / LMG 12228 / 1C / PRS 101 / PAO1)).